The sequence spans 212 residues: F420-dependent NADP reductase (212 aa).

NADP(+)-binding positions include T9–L12, S31–R32, K36, I72, H76, V98, and A137. L207 is a coenzyme F420-(gamma-Glu)n binding site.

It belongs to the F420-dependent NADP reductase family. In terms of assembly, homodimer.

It carries out the reaction reduced coenzyme F420-(gamma-L-Glu)(n) + NADP(+) = oxidized coenzyme F420-(gamma-L-Glu)(n) + NADPH + 2 H(+). Catalyzes the reversible reduction of NADP(+) by F420H(2). In this reaction the proS hydrogen at C5 of F420 is transferred into the proS position at C4 of NADPH. The protein is F420-dependent NADP reductase (fno) of Archaeoglobus fulgidus (strain ATCC 49558 / DSM 4304 / JCM 9628 / NBRC 100126 / VC-16).